A 138-amino-acid polypeptide reads, in one-letter code: Diuretic hormone 1 (138 aa).

The first 19 residues, 1–19, serve as a signal peptide directing secretion; that stretch reads MMWWAIWCVMVVVSSAASA. A propeptide spanning residues 20–78 is cleaved from the precursor; sequence APAPDSAPMDLVQIDSAGPDDESLGYAVSSLEGRYGAEAPWLYLLAEMPRDSQIGRAAV. Ile121 carries the isoleucine amide modification. Positions 125-138 are excised as a propeptide; it reads GLQWSRSEQPSAYY.

It belongs to the sauvagine/corticotropin-releasing factor/urotensin I family.

The protein localises to the secreted. In terms of biological role, regulation of fluid secretion. This is Diuretic hormone 1 from Manduca sexta (Tobacco hawkmoth).